The primary structure comprises 211 residues: Large ribosomal subunit protein uL3 (211 aa).

At glutamine 151 the chain carries N5-methylglutamine.

The protein belongs to the universal ribosomal protein uL3 family. As to quaternary structure, part of the 50S ribosomal subunit. Forms a cluster with proteins L14 and L19. In terms of processing, methylated by PrmB.

Functionally, one of the primary rRNA binding proteins, it binds directly near the 3'-end of the 23S rRNA, where it nucleates assembly of the 50S subunit. The sequence is that of Large ribosomal subunit protein uL3 from Francisella tularensis subsp. tularensis (strain FSC 198).